The chain runs to 288 residues: Probable HTH-type transcriptional regulator STM3175 (288 aa).

The 100-residue stretch at 14-113 (RRVCDHIERH…GQSPRRFRQS (100 aa)) folds into the HTH araC/xylS-type domain. DNA-binding regions (H-T-H motif) lie at residues 31 to 52 (EALSRMAHSSPFHFHRQFTTWS) and 80 to 103 (VIDIALDAGFQNPESFTRAFKTAF). The segment at 111–288 (RQSPDWLAWH…LLTDIYLPLR (178 aa)) is putative effector binding domain; binds the peptide antibiotic albicidin.

Homodimer.

Its function is as follows. Probable transcription factor. The protein is Probable HTH-type transcriptional regulator STM3175 of Salmonella typhimurium (strain LT2 / SGSC1412 / ATCC 700720).